Reading from the N-terminus, the 501-residue chain is Dipeptide and tripeptide permease A (501 aa).

The Cytoplasmic segment spans residues 1–34; sequence MSTANNKPTESVSLNAFKQPKSFYLIFSIELWER. The helical transmembrane segment at 35–55 threads the bilayer; it reads FGYYGLQGIMAVYLVKQLGMS. Residues 56-59 are Periplasmic-facing; that stretch reads EADS. Residues 60–80 form a helical membrane-spanning segment; it reads ITLFSSFSALVYGLVAIGGWL. The Cytoplasmic segment spans residues 81-89; sequence GDKVLGTKR. Residues 90–110 traverse the membrane as a helical segment; sequence VIMLGAIVLAIGYGLVAWSGH. A topological domain (periplasmic) is located at residue Asp-111. A helical transmembrane segment spans residues 112 to 132; that stretch reads VAIVYMGMATIAVGNGLFKAN. The Cytoplasmic segment spans residues 133–153; it reads PSSLLSTCYAKDDPRLDGAFT. Residues 154-174 traverse the membrane as a helical segment; the sequence is MYYMSINIGSFFSMLATPWLA. Over 175–178 the chain is Periplasmic; the sequence is AKFG. Residues 179–199 form a helical membrane-spanning segment; the sequence is WSVAFALSFVGMLITVVNFLF. Topologically, residues 200-217 are cytoplasmic; sequence CRSWVKDYGSKPDFEAVH. Residues 218–238 form a helical membrane-spanning segment; that stretch reads FGKLLATIAGVIVLIAIATWL. The Periplasmic portion of the chain corresponds to 239–246; it reads LHNQGIAR. A helical transmembrane segment spans residues 247 to 267; it reads MVLGVIALGIVIIFGKEAFAM. Residues 268-274 lie on the Cytoplasmic side of the membrane; the sequence is QGAARRK. A helical membrane pass occupies residues 275–295; it reads MIVAFILMLEAIIFFVLYSQM. At 296–320 the chain is on the periplasmic side; that stretch reads PTSLNFFAIRNVEHTILGIAVEPEQ. A helical membrane pass occupies residues 321–341; the sequence is YQALNPFWIIIGSPILAAIYN. At 342 to 352 the chain is on the cytoplasmic side; it reads KMGDTLPMPTK. A helical transmembrane segment spans residues 353-373; it reads FAIGMVLCSGAFLVLPLGAKF. The Periplasmic segment spans residues 374 to 383; that stretch reads ATDAGIVSVN. The chain crosses the membrane as a helical span at residues 384–404; sequence WLILSYGLQSIGELMISGLGL. The Cytoplasmic portion of the chain corresponds to 405 to 414; that stretch reads AMVAQLVPQR. A helical membrane pass occupies residues 415 to 435; sequence LMGFIMGSWFLTTAGANLIGG. Residues 436–459 are Periplasmic-facing; the sequence is YVAGMMAVPENVTDPLMSLEVYGR. The chain crosses the membrane as a helical span at residues 460 to 480; it reads VFLQIGVATAVIAALMLITAP. The Cytoplasmic portion of the chain corresponds to 481-501; the sequence is KLNRMTQDDEENAKAAKTATA.

This sequence belongs to the major facilitator superfamily. Proton-dependent oligopeptide transporter (POT/PTR) (TC 2.A.17) family. DtpA subfamily.

The protein localises to the cell inner membrane. In terms of biological role, proton-dependent permease that transports di- and tripeptides. This chain is Dipeptide and tripeptide permease A, found in Citrobacter koseri (strain ATCC BAA-895 / CDC 4225-83 / SGSC4696).